Here is a 248-residue protein sequence, read N- to C-terminus: 1-(5-phosphoribosyl)-5-[(5-phosphoribosylamino)methylideneamino] imidazole-4-carboxamide isomerase (248 aa).

Residue D8 is the Proton acceptor of the active site. The active-site Proton donor is the D131.

It belongs to the HisA/HisF family.

It is found in the cytoplasm. It carries out the reaction 1-(5-phospho-beta-D-ribosyl)-5-[(5-phospho-beta-D-ribosylamino)methylideneamino]imidazole-4-carboxamide = 5-[(5-phospho-1-deoxy-D-ribulos-1-ylimino)methylamino]-1-(5-phospho-beta-D-ribosyl)imidazole-4-carboxamide. The protein operates within amino-acid biosynthesis; L-histidine biosynthesis; L-histidine from 5-phospho-alpha-D-ribose 1-diphosphate: step 4/9. This chain is 1-(5-phosphoribosyl)-5-[(5-phosphoribosylamino)methylideneamino] imidazole-4-carboxamide isomerase, found in Paracidovorax citrulli (strain AAC00-1) (Acidovorax citrulli).